The sequence spans 389 residues: Odorant receptor 85c (389 aa).

The Cytoplasmic segment spans residues M1 to H33. A helical transmembrane segment spans residues L34–L54. Over G55 to A66 the chain is Extracellular. A helical membrane pass occupies residues V67 to W87. Residues W88 to Y130 lie on the Cytoplasmic side of the membrane. The helical transmembrane segment at A131–V151 threads the bilayer. Residues Y152–Q199 lie on the Extracellular side of the membrane. An N-linked (GlcNAc...) asparagine glycan is attached at N178. The helical transmembrane segment at I200–L220 threads the bilayer. The Cytoplasmic segment spans residues A221 to D259. A helical membrane pass occupies residues I260–G280. Residues F281–D290 are Extracellular-facing. Residues I291 to H311 traverse the membrane as a helical segment. The Cytoplasmic portion of the chain corresponds to Y312–T359. A helical membrane pass occupies residues I360–F380. Residues A381–K389 are Extracellular-facing.

Belongs to the insect chemoreceptor superfamily. Heteromeric odorant receptor channel (TC 1.A.69) family. Or49a subfamily. As to quaternary structure, interacts with Orco. Complexes exist early in the endomembrane system in olfactory sensory neurons (OSNs), coupling these complexes to the conserved ciliary trafficking pathway.

The protein localises to the cell membrane. Functionally, odorant receptor which mediates acceptance or avoidance behavior, depending on its substrates. The odorant receptor repertoire encodes a large collection of odor stimuli that vary widely in identity, intensity, and duration. May form a complex with Orco to form odorant-sensing units, providing sensitive and prolonged odorant signaling and calcium permeability. This chain is Odorant receptor 85c (Or85c), found in Drosophila melanogaster (Fruit fly).